Consider the following 221-residue polypeptide: MEQKLIIRQLGIRDYQKTWHEMQEFTDNRTDKSADEIWLVQHPSVFTQGQAGKAEHLLRSTAIPVVQSDRGGQITYHGIGQQIMYVLIDIKRLKTQGRDISVRQLVSALEQSVINTLADYGIESYAKADAPGVYIDGKKICSLGLRIRRGCSFHGLALNINMDLEPFHSINPCGYAGLEMAQLADFVSPQEADCGKVSPKLVEHFVTILGYNKQQIFNIKE.

The 183-residue stretch at 31–213 (DKSADEIWLV…HFVTILGYNK (183 aa)) folds into the BPL/LPL catalytic domain. Substrate contacts are provided by residues 70–77 (RGGQITYH), 142–144 (SLG), and 155–157 (GLA). The Acyl-thioester intermediate role is filled by Cys173.

This sequence belongs to the LipB family.

It localises to the cytoplasm. The catalysed reaction is octanoyl-[ACP] + L-lysyl-[protein] = N(6)-octanoyl-L-lysyl-[protein] + holo-[ACP] + H(+). The protein operates within protein modification; protein lipoylation via endogenous pathway; protein N(6)-(lipoyl)lysine from octanoyl-[acyl-carrier-protein]: step 1/2. Catalyzes the transfer of endogenously produced octanoic acid from octanoyl-acyl-carrier-protein onto the lipoyl domains of lipoate-dependent enzymes. Lipoyl-ACP can also act as a substrate although octanoyl-ACP is likely to be the physiological substrate. This Mannheimia succiniciproducens (strain KCTC 0769BP / MBEL55E) protein is Octanoyltransferase.